A 240-amino-acid polypeptide reads, in one-letter code: MGKNQPLPILITGGGRRIGLAIAWHFLNQKQPVIVSYRTHYPAIDGLTQAGALCIQADFSTDDGVLAFAEKIKTHTPGLRAILHNASAWMAEAPGTPLSDVLACMMQIHVNTPYLLNHALERLLRGHGHAATDIIHFTDYVVERGSDKHIAYAASKAALDNMTRSFARKLAPEVKVNAIAPSLILFNENDDAEYRQQALNKSLMKTAPGEKEVIDLVDYLLTSCFVTGRSFAVDGGRHLR.

The active-site Proton acceptor is tyrosine 152.

The protein belongs to the short-chain dehydrogenases/reductases (SDR) family. FolM subfamily.

The catalysed reaction is (6S)-5,6,7,8-tetrahydrofolate + NADP(+) = 7,8-dihydrofolate + NADPH + H(+). The enzyme catalyses 7,8-dihydromonapterin + NADPH + H(+) = 5,6,7,8-tetrahydromonapterin + NADP(+). Its function is as follows. Catalyzes the reduction of dihydromonapterin to tetrahydromonapterin. Also has lower activity with dihydrofolate. This is Dihydromonapterin reductase (folM) from Citrobacter koseri (strain ATCC BAA-895 / CDC 4225-83 / SGSC4696).